Here is a 642-residue protein sequence, read N- to C-terminus: Threonine--tRNA ligase (642 aa).

The TGS domain occupies methionine 1–threonine 61. Residues aspartate 243–proline 534 form a catalytic region. Positions 334, 385, and 511 each coordinate Zn(2+).

The protein belongs to the class-II aminoacyl-tRNA synthetase family. Homodimer. The cofactor is Zn(2+).

It is found in the cytoplasm. It catalyses the reaction tRNA(Thr) + L-threonine + ATP = L-threonyl-tRNA(Thr) + AMP + diphosphate + H(+). In terms of biological role, catalyzes the attachment of threonine to tRNA(Thr) in a two-step reaction: L-threonine is first activated by ATP to form Thr-AMP and then transferred to the acceptor end of tRNA(Thr). Also edits incorrectly charged L-seryl-tRNA(Thr). In Serratia proteamaculans (strain 568), this protein is Threonine--tRNA ligase.